The following is a 524-amino-acid chain: 2-isopropylmalate synthase (524 aa).

The 261-residue stretch at 15 to 275 (VVVFDTTMRD…PYGTSVDPVH (261 aa)) folds into the Pyruvate carboxyltransferase domain. Mn(2+)-binding residues include Asp24, His212, His214, and Asn248. A regulatory domain region spans residues 401 to 524 (RVSRLRVVAG…RPEAAIASGF (124 aa)).

Belongs to the alpha-IPM synthase/homocitrate synthase family. LeuA type 1 subfamily. In terms of assembly, homodimer. It depends on Mn(2+) as a cofactor.

It is found in the cytoplasm. It catalyses the reaction 3-methyl-2-oxobutanoate + acetyl-CoA + H2O = (2S)-2-isopropylmalate + CoA + H(+). The protein operates within amino-acid biosynthesis; L-leucine biosynthesis; L-leucine from 3-methyl-2-oxobutanoate: step 1/4. In terms of biological role, catalyzes the condensation of the acetyl group of acetyl-CoA with 3-methyl-2-oxobutanoate (2-ketoisovalerate) to form 3-carboxy-3-hydroxy-4-methylpentanoate (2-isopropylmalate). This chain is 2-isopropylmalate synthase, found in Caulobacter vibrioides (strain ATCC 19089 / CIP 103742 / CB 15) (Caulobacter crescentus).